The following is a 591-amino-acid chain: ATP-dependent lipid A-core flippase (591 aa).

5 consecutive transmembrane segments (helical) span residues 34–54, 71–91, 158–178, 258–278, and 285–305; these read LILA…LAVI, IWSV…CNFF, LVVI…TVII, LTPL…AVAL, and TLTA…FDPI. Residues 35–317 form the ABC transmembrane type-1 domain; that stretch reads ILAVLLMAGA…LTNLASKMQK (283 aa). An ABC transporter domain is found at 350–586; it reads IEFRQIGHRF…GGLYATLYNM (237 aa). 384 to 391 provides a ligand contact to ATP; that stretch reads GRSGSGKT.

The protein belongs to the ABC transporter superfamily. Lipid exporter (TC 3.A.1.106) family. Homodimer.

It localises to the cell inner membrane. The enzyme catalyses ATP + H2O + lipid A-core oligosaccharideSide 1 = ADP + phosphate + lipid A-core oligosaccharideSide 2.. In terms of biological role, involved in lipopolysaccharide (LPS) biosynthesis. Translocates lipid A-core from the inner to the outer leaflet of the inner membrane. Transmembrane domains (TMD) form a pore in the inner membrane and the ATP-binding domain (NBD) is responsible for energy generation. The polypeptide is ATP-dependent lipid A-core flippase (Bordetella avium (strain 197N)).